Here is a 133-residue protein sequence, read N- to C-terminus: MYPENYKRFLELIDKLREFEGALIVEGLRDEVALRNLGVRAEIIRLSRLPLSEVALIASSHKEVMILTDFDKKGEELAKKLLNYLAGYPCSVDIETWKELRKLVRKDIKGVEDLYGLYLRVVSVSDPLLEGIQ.

Residues 20–100 (EGALIVEGLR…SVDIETWKEL (81 aa)) form the Toprim domain. Positions 26, 69, and 71 each coordinate Mg(2+).

Belongs to the UPF0292 family. It depends on Mg(2+) as a cofactor.

The protein is UPF0292 protein TK1411 of Thermococcus kodakarensis (strain ATCC BAA-918 / JCM 12380 / KOD1) (Pyrococcus kodakaraensis (strain KOD1)).